The sequence spans 321 residues: Biotin synthase (321 aa).

Residues Tyr-45–Ala-271 form the Radical SAM core domain. The [4Fe-4S] cluster site is built by Cys-63, Cys-67, and Cys-70. [2Fe-2S] cluster is bound by residues Cys-106, Cys-139, Cys-199, and Arg-269.

It belongs to the radical SAM superfamily. Biotin synthase family. Homodimer. [4Fe-4S] cluster is required as a cofactor. Requires [2Fe-2S] cluster as cofactor.

The enzyme catalyses (4R,5S)-dethiobiotin + (sulfur carrier)-SH + 2 reduced [2Fe-2S]-[ferredoxin] + 2 S-adenosyl-L-methionine = (sulfur carrier)-H + biotin + 2 5'-deoxyadenosine + 2 L-methionine + 2 oxidized [2Fe-2S]-[ferredoxin]. It participates in cofactor biosynthesis; biotin biosynthesis; biotin from 7,8-diaminononanoate: step 2/2. Functionally, catalyzes the conversion of dethiobiotin (DTB) to biotin by the insertion of a sulfur atom into dethiobiotin via a radical-based mechanism. This is Biotin synthase from Staphylococcus epidermidis (strain ATCC 35984 / DSM 28319 / BCRC 17069 / CCUG 31568 / BM 3577 / RP62A).